We begin with the raw amino-acid sequence, 352 residues long: Fe(3+) ions import ATP-binding protein FbpC (352 aa).

The ABC transporter domain occupies 5–239 (LHIGHLSKSF…PADLDAVLFI (235 aa)). 37–44 (GASGCGKT) serves as a coordination point for ATP.

It belongs to the ABC transporter superfamily. Fe(3+) ion importer (TC 3.A.1.10) family. In terms of assembly, the complex is composed of two ATP-binding proteins (FbpC), two transmembrane proteins (FbpB) and a solute-binding protein (FbpA).

The protein localises to the cell inner membrane. The enzyme catalyses Fe(3+)(out) + ATP + H2O = Fe(3+)(in) + ADP + phosphate + H(+). Its function is as follows. Part of the ABC transporter complex FbpABC involved in Fe(3+) ions import. Responsible for energy coupling to the transport system. In Neisseria gonorrhoeae, this protein is Fe(3+) ions import ATP-binding protein FbpC.